The chain runs to 373 residues: Sensor protein DegM (373 aa).

A run of 4 helical transmembrane segments spans residues 27 to 47, 57 to 77, 91 to 111, and 122 to 142; these read ILLA…AIAV, LFLL…LCVN, YASL…LYLI, and VAGW…TYLF. Positions 170 to 370 constitute a Histidine kinase domain; sequence SIAHEVRNPL…KVVLSLPIEK (201 aa). His-173 carries the phosphohistidine; by autocatalysis modification.

Its subcellular location is the cell membrane. The catalysed reaction is ATP + protein L-histidine = ADP + protein N-phospho-L-histidine.. Its function is as follows. Involved in a sensory transduction pathway that enhances the production of minor proteases. The sequence is that of Sensor protein DegM (degM) from Bacillus sp. (strain B21-2).